The primary structure comprises 163 residues: Nodulin-13 (163 aa).

Gln-68 and Tyr-82 together coordinate kinetin. N(6)-dimethylallyladenine contacts are provided by Gln-68 and Tyr-82. Residues Gln-68, Tyr-82, and Tyr-133 each contribute to the trans-zeatin site.

It belongs to the BetVI family. As to quaternary structure, homodimer. As to expression, expressed in nodules, but not in leaves, stems, flowers and roots. Specifically located in the nodule cortex.

May be involved in nodule organogenesis rather in the processes related to nitrogen fixation or interactions with the bacteria. May regulate nodulation by controlling the levels of freely available cytokinins. This Medicago truncatula (Barrel medic) protein is Nodulin-13 (N13).